Here is a 424-residue protein sequence, read N- to C-terminus: MTAIIDIIGREILDSRGNPTVEVDVHLEDGSFGRAAVPSGASTGAHEAVELRDGGTRYLGKGVERAVDAVNGEIFEAIGGLDAENQIQIDKTMIELDGTSNKSRLGANAILGVSLAIAKAAAEAAGLPLYRYVGGPNAHLLPVPMMNIINGGAHADNPIDFQEFMIMPVGAETLKDAVRMGSEVFHTLKKQLAAEGHNTNVGDEGGFAPGLASAPAALDFIMKSIEKAGYKPGEDMYVALDCASTEFFKDGKYVLEGEGRTLEPGAMAEYLAELAGKYPIISIEDGMAEDDWDGWKALTDLIGNKCQLVGDDLFVTNSARLRDGIKMGVANSILVKVNQIGSLSETLDAVETAHKARYTAVMSHRSGETEDSTIADLAVATNCGQIKTGSLARSDRLAKYNQLIRIEEQLGLQAAYAGRSILRG.

A (2R)-2-phosphoglycerate-binding site is contributed by glutamine 162. The active-site Proton donor is glutamate 204. Residues aspartate 241, glutamate 284, and aspartate 311 each contribute to the Mg(2+) site. (2R)-2-phosphoglycerate-binding residues include lysine 336, arginine 365, serine 366, and lysine 387. Lysine 336 acts as the Proton acceptor in catalysis.

It belongs to the enolase family. Mg(2+) is required as a cofactor.

The protein localises to the cytoplasm. The protein resides in the secreted. It localises to the cell surface. The enzyme catalyses (2R)-2-phosphoglycerate = phosphoenolpyruvate + H2O. The protein operates within carbohydrate degradation; glycolysis; pyruvate from D-glyceraldehyde 3-phosphate: step 4/5. Catalyzes the reversible conversion of 2-phosphoglycerate (2-PG) into phosphoenolpyruvate (PEP). It is essential for the degradation of carbohydrates via glycolysis. The polypeptide is Enolase (Sinorhizobium fredii (strain NBRC 101917 / NGR234)).